Here is a 330-residue protein sequence, read N- to C-terminus: L-asparaginase (330 aa).

Residues 4–330 (PQVTILATGG…EAIQKIFSTY (327 aa)) enclose the Asparaginase/glutaminase domain. The active-site O-isoaspartyl threonine intermediate is Thr-14. Position 93 to 94 (93 to 94 (TD)) interacts with substrate.

This sequence belongs to the asparaginase 1 family. In terms of assembly, homotetramer.

It localises to the cytoplasm. It carries out the reaction L-asparagine + H2O = L-aspartate + NH4(+). The protein is L-asparaginase (ansA) of Wolinella succinogenes (strain ATCC 29543 / DSM 1740 / CCUG 13145 / JCM 31913 / LMG 7466 / NCTC 11488 / FDC 602W) (Vibrio succinogenes).